The following is a 207-amino-acid chain: Large ribosomal subunit protein uL4 (207 aa).

The segment at Lys48–Gly70 is disordered.

It belongs to the universal ribosomal protein uL4 family. In terms of assembly, part of the 50S ribosomal subunit.

Its function is as follows. One of the primary rRNA binding proteins, this protein initially binds near the 5'-end of the 23S rRNA. It is important during the early stages of 50S assembly. It makes multiple contacts with different domains of the 23S rRNA in the assembled 50S subunit and ribosome. In terms of biological role, forms part of the polypeptide exit tunnel. This chain is Large ribosomal subunit protein uL4, found in Francisella tularensis subsp. holarctica (strain FTNF002-00 / FTA).